The sequence spans 368 residues: D-alanine--D-alanine ligase (368 aa).

The ATP-grasp domain maps to 151-358 (KKLLAAEGLP…YRTLISTLVD (208 aa)). 179-234 (KAELGLPVFVKPARGGSSIGITRVSNWDGLDGAIAHARLHDPKVIVEGAIIGREVE) contacts ATP. Mg(2+) contacts are provided by D313, E325, and N327.

It belongs to the D-alanine--D-alanine ligase family. Mg(2+) serves as cofactor. It depends on Mn(2+) as a cofactor.

The protein localises to the cytoplasm. It carries out the reaction 2 D-alanine + ATP = D-alanyl-D-alanine + ADP + phosphate + H(+). It participates in cell wall biogenesis; peptidoglycan biosynthesis. Its function is as follows. Cell wall formation. The polypeptide is D-alanine--D-alanine ligase (Rhodococcus erythropolis (strain PR4 / NBRC 100887)).